The chain runs to 199 residues: Recombination protein RecR (199 aa).

A C4-type zinc finger spans residues 58-73 (CKKCFNLTSEDECEIC). The Toprim domain occupies 81–175 (KLICVVSETK…KVTRIAYGLP (95 aa)).

The protein belongs to the RecR family.

Its function is as follows. May play a role in DNA repair. It seems to be involved in an RecBC-independent recombinational process of DNA repair. It may act with RecF and RecO. The chain is Recombination protein RecR from Prochlorococcus marinus (strain AS9601).